A 523-amino-acid polypeptide reads, in one-letter code: Metalloendopeptidase OMA1, mitochondrial (523 aa).

A mitochondrion-targeting transit peptide spans 1 to 45; that stretch reads MSFIYGLQSAARNCFFFRFNLLTNWRKCNTQAVTSRDFHQVKINH. Positions 46–143 are excised as a propeptide; the sequence is IVNKSLGLGV…RSFHTSPRCQ (98 aa). The Mitochondrial matrix portion of the chain corresponds to 144–195; it reads AAPAPLLLMILKPAQKLLAIIVGRGIRKWWQALPPNKKELFKESLRKNKWKL. The segment at 148–167 is cardiolipin-binding; that stretch reads PLLLMILKPAQKLLAIIVGR. The interval 165 to 195 is stress-sensor region; that stretch reads VGRGIRKWWQALPPNKKELFKESLRKNKWKL. A helical transmembrane segment spans residues 196 to 216; the sequence is FLGLSSFGLLFVVFYFTHLEV. H327 contacts Zn(2+). Residue E328 is part of the active site. Zn(2+) is bound by residues H331 and E392. The cysteines at positions 407 and 465 are disulfide-linked.

It belongs to the peptidase M48 family. Homooligomer. Zn(2+) is required as a cofactor. In terms of processing, autocatalytically cleaved in response to mitochondrial depolarization both at the N-terminus and C-terminus to generate the short active form (S-OMA1). Autocatalytic processing at the C-terminus takes place at residues 447-456. The S-OMA1 form is unstable. OMA1 pre-processing by AFG3L2 may participate in maturation before OMA1 autocatalytic cleavage. Degraded by YMEL1 in response to membrane depolarization. Protein turnover is regulated by prohibitin (PHB and PHB2), which promotes degradation of OMA1 in a cardiolipin-binding manner. Post-translationally, may form a redox-dependent disulfide bond. Exists in a semi-oxidized state and is activated by prolonged hypoxia.

Its subcellular location is the mitochondrion inner membrane. Protease activity is activated upon autocatalytic cleavage in response to mitochondrial depolarization. Its function is as follows. Metalloprotease that is part of the quality control system in the inner membrane of mitochondria. Activated in response to various mitochondrial stress, leading to the proteolytic cleavage of target proteins, such as OPA1, UQCC3 and DELE1. Involved in the fusion of the mitochondrial inner membranes by mediating cleavage of OPA1 at S1 position, generating the soluble OPA1 (S-OPA1), which cooperates with the membrane form (L-OPA1) to coordinate the fusion of mitochondrial inner membranes. Following stress conditions that induce loss of mitochondrial membrane potential, mediates cleavage of OPA1, leading to excess production of soluble OPA1 (S-OPA1) and negative regulation of mitochondrial fusion. Involved in mitochondrial safeguard in response to transient mitochondrial membrane depolarization (flickering) by catalyzing cleavage of OPA1, leading to excess production of S-OPA1, preventing mitochondrial hyperfusion. Also acts as a regulator of apoptosis: upon BAK and BAX aggregation, mediates cleavage of OPA1, leading to the remodeling of mitochondrial cristae and allowing the release of cytochrome c from mitochondrial cristae. In depolarized mitochondria, may also act as a backup protease for PINK1 by mediating PINK1 cleavage and promoting its subsequent degradation by the proteasome. May also cleave UQCC3 in response to mitochondrial depolarization. Also acts as an activator of the integrated stress response (ISR): in response to mitochondrial stress, mediates cleavage of DELE1 to generate the processed form of DELE1 (S-DELE1), which translocates to the cytosol and activates EIF2AK1/HRI to trigger the ISR. Its role in mitochondrial quality control is essential for regulating lipid metabolism as well as to maintain body temperature and energy expenditure under cold-stress conditions. Binds cardiolipin, possibly regulating its protein turnover. Required for the stability of the respiratory supercomplexes. This Bos taurus (Bovine) protein is Metalloendopeptidase OMA1, mitochondrial.